The sequence spans 369 residues: DNA replication and repair protein RecF (369 aa).

An ATP-binding site is contributed by 30 to 37 (GDNAQGKT).

The protein belongs to the RecF family.

It localises to the cytoplasm. In terms of biological role, the RecF protein is involved in DNA metabolism; it is required for DNA replication and normal SOS inducibility. RecF binds preferentially to single-stranded, linear DNA. It also seems to bind ATP. In Streptococcus equi subsp. zooepidemicus (strain MGCS10565), this protein is DNA replication and repair protein RecF.